A 627-amino-acid chain; its full sequence is (-)-beta-pinene synthase 2, chloroplastic (627 aa).

A chloroplast-targeting transit peptide spans 1 to 51; it reads MDLISVLPSASKSCVCLHKPLSSSTHKLKPFCRKIRILGMPRPRKSVLMVS. The Mg(2+) site is built by Asp378, Asp382, and Asp530. Residues 378-382 carry the DDXXD motif motif; it reads DDMYD.

Belongs to the terpene synthase family. Tpsd subfamily. It depends on Mg(2+) as a cofactor. Mn(2+) serves as cofactor.

It is found in the plastid. The protein localises to the chloroplast. The enzyme catalyses (2E)-geranyl diphosphate = (1S,5S)-beta-pinene + diphosphate. It catalyses the reaction (2E)-geranyl diphosphate = (1S,5S)-alpha-pinene + diphosphate. It functions in the pathway terpene metabolism; oleoresin biosynthesis. The protein operates within secondary metabolite biosynthesis; terpenoid biosynthesis. In terms of biological role, monoterpene synthase (TPS) involved in the biosynthesis of monoterpene natural products included in conifer oleoresin secretions and volatile emissions; these compounds contribute to biotic and abiotic stress defense against herbivores and pathogens. Catalyzes the conversion of (2E)-geranyl diphosphate (GPP) to (-)-beta-pinene and, to a lower extent, to (-)-alpha-pinene. This Pinus banksiana (Jack pine) protein is (-)-beta-pinene synthase 2, chloroplastic.